Reading from the N-terminus, the 95-residue chain is UPF0512 protein H (95 aa).

Belongs to the UPF0512 family.

In Dictyostelium discoideum (Social amoeba), this protein is UPF0512 protein H.